Reading from the N-terminus, the 205-residue chain is Phosphoheptose isomerase (205 aa).

Residues 38–200 enclose the SIS domain; sequence LAVRLALGSK…LFEAVGELEP (163 aa). 53–55 contacts substrate; sequence NGG. Residues histidine 62 and glutamate 66 each contribute to the Zn(2+) site. Substrate-binding positions include glutamate 66, 95 to 96, 121 to 123, serine 126, and glutamine 173; these read ND and STS. Zn(2+)-binding residues include glutamine 173 and histidine 181.

This sequence belongs to the SIS family. GmhA subfamily. In terms of assembly, homotetramer. Requires Zn(2+) as cofactor.

It localises to the cytoplasm. The enzyme catalyses 2 D-sedoheptulose 7-phosphate = D-glycero-alpha-D-manno-heptose 7-phosphate + D-glycero-beta-D-manno-heptose 7-phosphate. Its pathway is carbohydrate biosynthesis; D-glycero-D-manno-heptose 7-phosphate biosynthesis; D-glycero-alpha-D-manno-heptose 7-phosphate and D-glycero-beta-D-manno-heptose 7-phosphate from sedoheptulose 7-phosphate: step 1/1. Catalyzes the isomerization of sedoheptulose 7-phosphate in D-glycero-D-manno-heptose 7-phosphate. The sequence is that of Phosphoheptose isomerase from Maridesulfovibrio salexigens (strain ATCC 14822 / DSM 2638 / NCIMB 8403 / VKM B-1763) (Desulfovibrio salexigens).